The sequence spans 524 residues: MAGVSYAAPWWVSLLHRLPHFDLRWEATSSQFRPEDADYQQALLLLGATALACLALDLLFLLFYSFWLCCRRRKTDEHLDADCCCTAWCVIITTLVCSAGIAVGFYGNGETSDGIHRATYSLRHANRTVAGVQDRVWDTAAALNRTAEPNLQSLERQLAGRQEPLRAVQRLQTLLGTLLGYTAAIPFWRNPGVSLEVLAEQVDLYDWYRWLGYLGLLLLDVIICLLVLVGLIRSSKGILVGVCLLGVLALVISWGALGLELAVSVGSSDFCVDPDTFVTKMVEEHSVLSGDILQYYLACSPRATNPFQQKLSGSHKALVEMQDVVAELLRNVPREHPATKDPLLRVQEVLNGTEVNLQHLTALVDCRSLHLDYVQALTGFCYDGVEGLIYLALFSFVTALMFSSIVCSIPHTWQQKRGPDDDGEEETAPGPRQAHDSLYRVHMPSLYSCGSSYGSEASIPAAAHTVSNAPVTEYMSQNANFQNPRCENTPLIGRESPPPSYTSSMRAKYLATSQPRPDSSGSGH.

Residues 1–42 (MAGVSYAAPWWVSLLHRLPHFDLRWEATSSQFRPEDADYQQA) lie on the Extracellular side of the membrane. Residues 43-63 (LLLLGATALACLALDLLFLLF) traverse the membrane as a helical segment. The Cytoplasmic segment spans residues 64-86 (YSFWLCCRRRKTDEHLDADCCCT). Residues 87–107 (AWCVIITTLVCSAGIAVGFYG) traverse the membrane as a helical segment. Topologically, residues 108-211 (NGETSDGIHR…VDLYDWYRWL (104 aa)) are extracellular. Ca(2+) is bound by residues Glu-110 and Asp-113. Residues Asn-126 and Asn-144 are each glycosylated (N-linked (GlcNAc...) asparagine). The chain crosses the membrane as a helical span at residues 212 to 232 (GYLGLLLLDVIICLLVLVGLI). Residues 233-236 (RSSK) are Cytoplasmic-facing. The chain crosses the membrane as a helical span at residues 237–257 (GILVGVCLLGVLALVISWGAL). Topologically, residues 258 to 386 (GLELAVSVGS…LTGFCYDGVE (129 aa)) are extracellular. Cystine bridges form between Cys-271–Cys-381 and Cys-299–Cys-366. An N-linked (GlcNAc...) asparagine glycan is attached at Asn-351. Residues 387-407 (GLIYLALFSFVTALMFSSIVC) traverse the membrane as a helical segment. The Cytoplasmic segment spans residues 408–524 (SIPHTWQQKR…PRPDSSGSGH (117 aa)). Disordered regions lie at residues 413 to 435 (WQQK…RQAH) and 485 to 524 (RCEN…GSGH). Ser-496 bears the Phosphoserine mark. The short motif at 498-501 (PPSY) is the PY-motif; mediates interaction with NEDD4L element. Over residues 501-524 (YTSSMRAKYLATSQPRPDSSGSGH) the composition is skewed to polar residues. 2 positions are modified to phosphoserine: Ser-504 and Ser-522.

This sequence belongs to the tweety family. As to quaternary structure, homotetramer; disulfide-linked. Forms cis-homodimers in the presence of Ca(2+). Interacts with NEDD4L. Ubiquitinated by NEDD4L. In terms of processing, N-glycosylated. Expressed in excitable tissues. Expressed in the brain, heart, skeletal muscle, colon, spleen, kidney and peripheral blood leukocytes. Also expressed in fat, the pancreas, thymus, and uterus.

It localises to the cell membrane. It catalyses the reaction chloride(in) = chloride(out). The enzyme catalyses L-glutamate(out) = L-glutamate(in). With respect to regulation, inhibited by (4-[(2-butyl-6,7-dichloro-2- cyclopentyl-2,3-dihydro-1-oxo-1H-inden-5-yl)oxy]butanoic acid), genistein and PD98059 (MEK1 inhibitor). Functionally, calcium-independent, swelling-dependent volume-regulated anion channel (VRAC-swell) which plays a pivotal role in the process of regulatory volume decrease (RVD) in the brain through the efflux of anions like chloride and organic osmolytes like glutamate. Probable large-conductance Ca(2+)-activated chloride channel. The sequence is that of Protein tweety homolog 3 (Ttyh3) from Mus musculus (Mouse).